A 412-amino-acid polypeptide reads, in one-letter code: Tryptophan 2,3-dioxygenase (412 aa).

Residues 79 to 83 (FIVVH), Y146, and R150 each bind substrate. Position 346 (H346) interacts with heme. Position 360 (T360) interacts with substrate.

The protein belongs to the tryptophan 2,3-dioxygenase family. In terms of assembly, homotetramer. The cofactor is heme.

It carries out the reaction L-tryptophan + O2 = N-formyl-L-kynurenine. It participates in amino-acid degradation; L-tryptophan degradation via kynurenine pathway; L-kynurenine from L-tryptophan: step 1/2. Its function is as follows. Heme-dependent dioxygenase that catalyzes the oxidative cleavage of the L-tryptophan (L-Trp) pyrrole ring and converts L-tryptophan to N-formyl-L-kynurenine. Catalyzes the oxidative cleavage of the indole moiety. This Sorangium cellulosum (strain So ce56) (Polyangium cellulosum (strain So ce56)) protein is Tryptophan 2,3-dioxygenase.